The following is a 376-amino-acid chain: Protein-glutamate methylesterase/protein-glutamine glutaminase 1 (376 aa).

In terms of domain architecture, Response regulatory spans 4–121 (KVLVVDDSSF…ARNRDEAVSL (118 aa)). Asp55 is subject to 4-aspartylphosphate. The segment at 138-174 (RPVASSTPVQERPQSTLNRPTTGLRREAPAQAPVSRA) is disordered. Positions 141–158 (ASSTPVQERPQSTLNRPT) are enriched in polar residues. Residues 183 to 376 (SGKKYQLTAI…ERMLVEVGLA (194 aa)) enclose the CheB-type methylesterase domain. Catalysis depends on residues Ser195, His222, and Asp318.

This sequence belongs to the CheB family. Post-translationally, phosphorylated by CheA. Phosphorylation of the N-terminal regulatory domain activates the methylesterase activity.

The protein localises to the cytoplasm. It catalyses the reaction [protein]-L-glutamate 5-O-methyl ester + H2O = L-glutamyl-[protein] + methanol + H(+). The enzyme catalyses L-glutaminyl-[protein] + H2O = L-glutamyl-[protein] + NH4(+). Its function is as follows. Involved in chemotaxis. Part of a chemotaxis signal transduction system that modulates chemotaxis in response to various stimuli. Catalyzes the demethylation of specific methylglutamate residues introduced into the chemoreceptors (methyl-accepting chemotaxis proteins or MCP) by CheR. Also mediates the irreversible deamidation of specific glutamine residues to glutamic acid. The chain is Protein-glutamate methylesterase/protein-glutamine glutaminase 1 from Vibrio vulnificus (strain CMCP6).